We begin with the raw amino-acid sequence, 407 residues long: Na(+)-translocating NADH-quinone reductase subunit F (407 aa).

A helical membrane pass occupies residues 3-23 (IILGVVMFTLIVLALTVMILF). Residues 32 to 126 (GDITVEINED…NLKIELPEEI (95 aa)) enclose the 2Fe-2S ferredoxin-type domain. [2Fe-2S] cluster contacts are provided by Cys69, Cys75, Cys78, and Cys110. One can recognise an FAD-binding FR-type domain in the interval 129–269 (VKKWTCEVIS…SGPFGEFFAK (141 aa)).

The protein belongs to the NqrF family. In terms of assembly, composed of six subunits; NqrA, NqrB, NqrC, NqrD, NqrE and NqrF. [2Fe-2S] cluster is required as a cofactor. The cofactor is FAD.

It is found in the cell inner membrane. The catalysed reaction is a ubiquinone + n Na(+)(in) + NADH + H(+) = a ubiquinol + n Na(+)(out) + NAD(+). In terms of biological role, NQR complex catalyzes the reduction of ubiquinone-1 to ubiquinol by two successive reactions, coupled with the transport of Na(+) ions from the cytoplasm to the periplasm. The first step is catalyzed by NqrF, which accepts electrons from NADH and reduces ubiquinone-1 to ubisemiquinone by a one-electron transfer pathway. The chain is Na(+)-translocating NADH-quinone reductase subunit F from Yersinia pseudotuberculosis serotype O:1b (strain IP 31758).